A 50-amino-acid chain; its full sequence is Large ribosomal subunit protein bL33 (50 aa).

Belongs to the bacterial ribosomal protein bL33 family.

This chain is Large ribosomal subunit protein bL33, found in Koribacter versatilis (strain Ellin345).